The primary structure comprises 529 residues: Lysophosphatidylcholine acyltransferase 2 (529 aa).

At 1-50 (MPPPHRVFALPRQQSLLLPAVINPFVHDLSLSTADITKCFLLGIILVPLR) the chain is on the cytoplasmic side. The chain crosses the membrane as a helical; Signal-anchor for type II membrane protein span at residues 51–71 (AIFLLLVLLVMWPVSVIITFG). Residues 72–529 (QSLKGVVEPM…EDSASDKKDD (458 aa)) lie on the Lumenal side of the membrane. An HXXXXD motif motif is present at residues 128–133 (HSSFFD). Positions 202 to 205 (EGTC) match the EGTC motif motif. The N-linked (GlcNAc...) asparagine glycan is linked to N207. EF-hand domains follow at residues 373–408 (PISP…LCRP), 410–445 (NNEE…ALGV), and 449–480 (DVHS…HPEY). The Ca(2+) site is built by D386, N388, D390, T392, E397, D423, D425, D427, C429, E434, D458, D460, S462, H464, and E469.

It belongs to the 1-acyl-sn-glycerol-3-phosphate acyltransferase family.

The protein localises to the endoplasmic reticulum membrane. It localises to the golgi apparatus membrane. Its subcellular location is the cell membrane. The protein resides in the lipid droplet. The enzyme catalyses a 1-acyl-sn-glycero-3-phosphocholine + an acyl-CoA = a 1,2-diacyl-sn-glycero-3-phosphocholine + CoA. It catalyses the reaction a 1-O-alkyl-sn-glycero-3-phosphocholine + acetyl-CoA = a 1-O-alkyl-2-acetyl-sn-glycero-3-phosphocholine + CoA. It carries out the reaction a 1-acyl-sn-glycero-3-phosphate + an acyl-CoA = a 1,2-diacyl-sn-glycero-3-phosphate + CoA. The catalysed reaction is a 1-O-(1Z-alkenyl)-sn-glycero-3-phosphocholine + an acyl-CoA = a 1-O-(1Z-alkenyl)-2-acyl-sn-glycero-3-phosphocholine + CoA. The enzyme catalyses 1-hexadecanoyl-sn-glycero-3-phosphate + (9Z)-octadecenoyl-CoA = 1-hexadecanoyl-2-(9Z-octadecenoyl)-sn-glycero-3-phosphate + CoA. It catalyses the reaction 1-(9Z-octadecenoyl)-sn-glycero-3-phosphate + (9Z)-octadecenoyl-CoA = 1,2-di-(9Z-octadecenoyl)-sn-glycero-3-phosphate + CoA. It carries out the reaction 1-(9Z-octadecenoyl)-sn-glycero-3-phosphate + hexadecanoyl-CoA = 1-(9Z)-octadecenoyl-2-hexadecanoyl-sn-glycero-3-phosphate + CoA. The catalysed reaction is 1-heptadecanoyl-sn-glycero-3-phosphate + (9Z)-octadecenoyl-CoA = 1-heptadecanoyl-2-(9Z)-octadecenoyl-sn-glycero-3-phosphate + CoA. The enzyme catalyses 1-octadecanoyl-sn-glycero-3-phosphate + (9Z)-octadecenoyl-CoA = 1-octadecanoyl-2-(9Z-octadecenoyl)-sn-glycero-3-phosphate + CoA. It catalyses the reaction heptadecanoyl-CoA + 1-(9Z-octadecenoyl)-sn-glycero-3-phosphate = 1-(9Z)-octadecenoyl-2-heptadecanoyl-sn-glycero-3-phosphate + CoA. It carries out the reaction 1-(9Z-octadecenoyl)-sn-glycero-3-phosphate + (9Z,12Z)-octadecadienoyl-CoA = 1-(9Z)-octadecenoyl-2-(9Z,12Z)-octadecadienoyl-sn-glycero-3-phosphate + CoA. The catalysed reaction is 1-(9Z-octadecenoyl)-sn-glycero-3-phosphate + tetradecanoyl-CoA = 1-(9Z)-octadecenoyl-2-tetradecanoyl-sn-glycero-3-phosphate + CoA. The enzyme catalyses pentadecanoyl-CoA + 1-(9Z-octadecenoyl)-sn-glycero-3-phosphate = 1-(9Z)-octadecenoyl-2-pentadecanoyl-sn-glycero-3-phosphate + CoA. It catalyses the reaction nonadecanoyl-CoA + 1-(9Z-octadecenoyl)-sn-glycero-3-phosphate = 1-(9Z)-octadecenoyl-2-nonadecanoyl-sn-glycero-3-phosphate + CoA. It carries out the reaction 1-hexadecanoyl-sn-glycero-3-phosphocholine + (9Z)-octadecenoyl-CoA = 1-hexadecanoyl-2-(9Z-octadecenoyl)-sn-glycero-3-phosphocholine + CoA. The catalysed reaction is 1-O-hexadecyl-sn-glycero-3-phosphocholine + acetyl-CoA = 1-O-hexadecyl-2-acetyl-sn-glycero-3-phosphocholine + CoA. The enzyme catalyses 1-O-octadecyl-sn-glycero-3-phosphocholine + acetyl-CoA = 1-O-octadecyl-2-acetyl-sn-glycero-3-phosphocholine + CoA. It catalyses the reaction 1-hexadecanoyl-sn-glycero-3-phosphocholine + acetyl-CoA = 1-hexadecanoyl-2-acetyl-sn-glycero-3-phosphocholine + CoA. It carries out the reaction 1-octadecanoyl-sn-glycero-3-phosphocholine + acetyl-CoA = 1-octadecanoyl-2-acetyl-sn-glycero-3-phosphocholine + CoA. The catalysed reaction is a 1-O-(1Z-alkenyl)-sn-glycero-3-phosphocholine + acetyl-CoA = 1-O-(1Z)-alkenyl-2-acetyl-sn-glycero-3-phosphocholine + CoA. The enzyme catalyses 1-O-octadecyl-sn-glycero-3-phosphocholine + (5Z,8Z,11Z,14Z)-eicosatetraenoyl-CoA = 1-O-octadecyl-2-(5Z,8Z,11Z,14Z)-eicosatetraenoyl-sn-glycero-3-phosphocholine + CoA. Its pathway is lipid metabolism; phospholipid metabolism. Exhibits both acyltransferase and acetyltransferase activities. Activity is calcium-dependent. Catalyzes the conversion of lysophosphatidylcholine (1-acyl-sn-glycero-3-phosphocholine or LPC) into phosphatidylcholine (1,2-diacyl-sn-glycero-3-phosphocholine or PC). Catalyzes the conversion 1-acyl-sn-glycerol-3-phosphate (lysophosphatidic acid or LPA) into 1,2-diacyl-sn-glycerol-3-phosphate (phosphatidic acid or PA) by incorporating an acyl moiety at the sn-2 position of the glycerol backbone. Involved in platelet-activating factor (PAF) biosynthesis by catalyzing the conversion of the PAF precursor, 1-O-alkyl-sn-glycero-3-phosphocholine (lyso-PAF) into 1-O-alkyl-2-acetyl-sn-glycero-3-phosphocholine (PAF). This is Lysophosphatidylcholine acyltransferase 2 (lpcat2) from Danio rerio (Zebrafish).